A 395-amino-acid chain; its full sequence is Phosphopentomutase (395 aa).

6 residues coordinate Mn(2+): Asp-12, Asp-289, His-294, Asp-330, His-331, and His-342.

It belongs to the phosphopentomutase family. Mn(2+) serves as cofactor.

It localises to the cytoplasm. The enzyme catalyses 2-deoxy-alpha-D-ribose 1-phosphate = 2-deoxy-D-ribose 5-phosphate. It catalyses the reaction alpha-D-ribose 1-phosphate = D-ribose 5-phosphate. Its pathway is carbohydrate degradation; 2-deoxy-D-ribose 1-phosphate degradation; D-glyceraldehyde 3-phosphate and acetaldehyde from 2-deoxy-alpha-D-ribose 1-phosphate: step 1/2. Its function is as follows. Isomerase that catalyzes the conversion of deoxy-ribose 1-phosphate (dRib-1-P) and ribose 1-phosphate (Rib-1-P) to deoxy-ribose 5-phosphate (dRib-5-P) and ribose 5-phosphate (Rib-5-P), respectively. The chain is Phosphopentomutase from Levilactobacillus brevis (strain ATCC 367 / BCRC 12310 / CIP 105137 / JCM 1170 / LMG 11437 / NCIMB 947 / NCTC 947) (Lactobacillus brevis).